The following is a 353-amino-acid chain: G-protein coupled estrogen receptor 1 (353 aa).

Residues 1–40 (MEEQTTNVIQIYVNGTEQFNASFDFNITDVKESTDTYEFY) are Extracellular-facing. Residues 41 to 61 (IIGLFLSCLYTIFLFPIGFIG) form a helical membrane-spanning segment. The Cytoplasmic segment spans residues 62–81 (NILILVVNLNHRERMTIPDL). Residues 82-102 (YFVNLAVADLILVADSLIEVF) traverse the membrane as a helical segment. Residues 103–112 (NLNEKYYDYA) are Extracellular-facing. A helical membrane pass occupies residues 113–133 (VLCTFMSLFLQVNMYSSIFFL). Cysteine 115 and cysteine 192 form a disulfide bridge. The Cytoplasmic portion of the chain corresponds to 134–160 (TWMSFDRYVALTSSMSSSPLRTMQHAK). A helical membrane pass occupies residues 161–181 (LSCSLIWMASILATLLPFTIV). Residues 182–202 (QTQHTGEVHFCFANVFEIQWL) lie on the Extracellular side of the membrane. The chain crosses the membrane as a helical span at residues 203 to 223 (EVTIGFLIPFSIIGLCYSLIV). Residues 224-245 (RTLMRAQKHKGLWPRRQKALRM) lie on the Cytoplasmic side of the membrane. A helical membrane pass occupies residues 246-266 (IVVVVLVFFICWLPENVFISI). The Extracellular portion of the chain corresponds to 267-292 (QLLQGTADPSKRTDTTLWHDYPLTGH). The chain crosses the membrane as a helical span at residues 293-313 (IVNLAAFSNSCLNPIIYSFLG). Residues 314–353 (ETFRDKLRLFIKRKASWSVVYRFCNHTLDLQIPVRSESEV) lie on the Cytoplasmic side of the membrane.

Belongs to the G-protein coupled receptor 1 family. In terms of assembly, homodimer. Heterodimer. Expressed in brain regions that are known to control reproduction and sex behavior. Expressed in ovary, muscle and intestine. Expressed in early germ cells of the testis, including the spermatogonia, spermatocytes, and somatic cells such as Sertoli cells.

The protein resides in the nucleus. It is found in the cytoplasm. It localises to the perinuclear region. The protein localises to the cytoskeleton. Its subcellular location is the cytoplasmic vesicle membrane. The protein resides in the cell membrane. It is found in the basolateral cell membrane. It localises to the endoplasmic reticulum membrane. The protein localises to the early endosome. Its subcellular location is the recycling endosome. The protein resides in the golgi apparatus. It is found in the trans-Golgi network. It localises to the golgi apparatus membrane. The protein localises to the cell projection. Its subcellular location is the dendrite. The protein resides in the dendritic spine membrane. It is found in the axon. It localises to the postsynaptic density. The protein localises to the mitochondrion membrane. Membrane G-protein coupled estrogen receptor that binds to 17-beta-estradiol (E2) with high affinity, leading to rapid and transient activation of numerous intracellular signaling pathways. Plays a role in the embryonic development of sensory and motor neurons. Specifically induces apoptosis and reduces proliferation of brain cells. Involved in maintenance of meiotic arrest in oocytes. The protein is G-protein coupled estrogen receptor 1 (gper1) of Danio rerio (Zebrafish).